A 313-amino-acid polypeptide reads, in one-letter code: Phenylalanine-4-hydroxylase (313 aa).

Residues His-154, His-159, and Glu-200 each contribute to the Fe cation site.

This sequence belongs to the biopterin-dependent aromatic amino acid hydroxylase family. The cofactor is Fe(2+).

It catalyses the reaction (6R)-L-erythro-5,6,7,8-tetrahydrobiopterin + L-phenylalanine + O2 = (4aS,6R)-4a-hydroxy-L-erythro-5,6,7,8-tetrahydrobiopterin + L-tyrosine. It participates in amino-acid degradation; L-phenylalanine degradation; acetoacetate and fumarate from L-phenylalanine: step 1/6. The polypeptide is Phenylalanine-4-hydroxylase (phhA) (Ralstonia nicotianae (strain ATCC BAA-1114 / GMI1000) (Ralstonia solanacearum)).